Reading from the N-terminus, the 256-residue chain is Calsenilin (256 aa).

Positions 1–22 (MQRTKEAVKASDGNLLGDPGRI) are disordered. Lysine 26 is covalently cross-linked (Glycyl lysine isopeptide (Lys-Gly) (interchain with G-Cter in SUMO1)). 2 S-palmitoyl cysteine lipidation sites follow: cysteine 45 and cysteine 46. 2 positions are modified to phosphoserine: serine 60 and serine 63. One can recognise an EF-hand 1; degenerate domain in the interval 67–123 (LELSTVRHQPEGLDQLQAQTKFTKKELQSLYRGFKNECPTGLVDEDTFKLIYSQFFP). Lysine 90 is covalently cross-linked (Glycyl lysine isopeptide (Lys-Gly) (interchain with G-Cter in SUMO1)). EF-hand domains are found at residues 126 to 161 (DATT…LLRG), 162 to 197 (TVHE…IYDM), and 210 to 245 (APLE…DENI). 9 residues coordinate Ca(2+): aspartate 175, asparagine 177, aspartate 179, cysteine 181, glutamate 186, aspartate 223, asparagine 225, aspartate 227, and glutamate 234. The interval 243–256 (ENIMNSMQLFENVI) is interaction with KCND2.

This sequence belongs to the recoverin family. In terms of assembly, binds to DNA as a homomultimer. Dimerization is induced by binding to calcium. Interacts with the C-terminus of PSEN1 and PSEN2 and with PSEN2 CTF subunit. Associates with KCN1. Component of heteromultimeric potassium channels. Identified in potassium channel complexes containing KCND1, KCND2, KCND3, KCNIP1, KCNIP2, KCNIP3, KCNIP4, DPP6 and DPP10. Interacts with KCND2 and KCND3. Post-translationally, palmitoylated. Palmitoylation enhances association with the plasma membrane. In terms of processing, proteolytically cleaved by caspase-3. In terms of tissue distribution, highly expressed in brain. Isoform 1 or isoform 4 (T+ forms) are expressed at equal levels with isoform 2 or isoform 3 (T- forms). Primarily detected in the layer V and deep layer VI of the cerebral cortex, the hippocampus, and the entire cerebellum. Expressed at low levels in testis. Also expressed in heart.

Its subcellular location is the cytoplasm. The protein resides in the cell membrane. It localises to the endoplasmic reticulum. It is found in the golgi apparatus. The protein localises to the nucleus. Its function is as follows. Calcium-dependent transcriptional repressor that binds to the DRE element of genes including PDYN and FOS. Affinity for DNA is reduced upon binding to calcium and enhanced by binding to magnesium. Seems to be involved in nociception. Functionally, regulatory subunit of Kv4/D (Shal)-type voltage-gated rapidly inactivating A-type potassium channels, such as KCND2/Kv4.2 and KCND3/Kv4.3. Modulates channel expression at the cell membrane, gating characteristics, inactivation kinetics and rate of recovery from inactivation in a calcium-dependent and isoform-specific manner. In terms of biological role, may play a role in the regulation of PSEN2 proteolytic processing and apoptosis. Together with PSEN2 involved in modulation of amyloid-beta formation. This chain is Calsenilin (Kcnip3), found in Mus musculus (Mouse).